A 468-amino-acid polypeptide reads, in one-letter code: MDRLPPPPPPPRQPLPRAQVLAEKAFSALEHFLHIEAVSGIVLLAAAGIALLWANSPASHSYHALWHTPLSFGIGSHLVSQSLHFWINDALMTIFFLVVGMEIRREIHEGALANVRLSALPMAAALGGVIVPALIYLAINTEMPQRQGWAVPTATDIAFAVGVLALLGKSIPGNVRVFLLALAIIDDIVAVLIIAVAFSGGLDYGGFLVAGTGILMVLGLQWIGVGTAYAYVVPGAILWLGMLKTGAHPTLAGVVLGMMTPVLPGRTRERPLDVAMRALLDLRARATARTPKPEHIAAPLKQLRHAQRELLPPVIRVQMALHPWVAYLVMPLFALANAGVSIDGVDLTSGGSLGAMFGVVLALVVGKPLGIVSVSWLAVRLGWCQLPPDVTWRGVCLVGLLAGIGFTMSIFIATLAFEDVNLLGAAKLGVLLASAIAATIGLTWGFIYARGRRPSMERADESTAAASD.

The next 10 membrane-spanning stretches (helical) occupy residues 32–52 (FLHI…IALL), 83–103 (LHFW…GMEI), 119–139 (ALPM…YLAI), 148–168 (GWAV…ALLG), 178–198 (FLLA…AVAF), 205–225 (GGFL…WIGV), 320–340 (ALHP…NAGV), 354–374 (GAMF…IVSV), 397–417 (LVGL…TLAF), and 428–448 (LGVL…GFIY).

Belongs to the NhaA Na(+)/H(+) (TC 2.A.33) antiporter family.

Its subcellular location is the cell inner membrane. It catalyses the reaction Na(+)(in) + 2 H(+)(out) = Na(+)(out) + 2 H(+)(in). In terms of biological role, na(+)/H(+) antiporter that extrudes sodium in exchange for external protons. This Cupriavidus necator (strain ATCC 17699 / DSM 428 / KCTC 22496 / NCIMB 10442 / H16 / Stanier 337) (Ralstonia eutropha) protein is Na(+)/H(+) antiporter NhaA.